The chain runs to 294 residues: Cytidine deaminase (294 aa).

2 CMP/dCMP-type deaminase domains span residues 48–168 (DEDA…FGPK) and 186–294 (LTGD…VLLG). A substrate-binding site is contributed by 89 to 91 (NME). A Zn(2+)-binding site is contributed by His-102. Glu-104 functions as the Proton donor in the catalytic mechanism. 2 residues coordinate Zn(2+): Cys-129 and Cys-132.

The protein belongs to the cytidine and deoxycytidylate deaminase family. In terms of assembly, homodimer. The cofactor is Zn(2+).

The catalysed reaction is cytidine + H2O + H(+) = uridine + NH4(+). It catalyses the reaction 2'-deoxycytidine + H2O + H(+) = 2'-deoxyuridine + NH4(+). In terms of biological role, this enzyme scavenges exogenous and endogenous cytidine and 2'-deoxycytidine for UMP synthesis. This Salmonella arizonae (strain ATCC BAA-731 / CDC346-86 / RSK2980) protein is Cytidine deaminase.